The primary structure comprises 242 residues: Carboxy-S-adenosyl-L-methionine synthase (242 aa).

S-adenosyl-L-methionine contacts are provided by residues Y39, 64-66, 89-90, 117-118, N132, and R199; these read GCS, DN, and DI.

It belongs to the class I-like SAM-binding methyltransferase superfamily. Cx-SAM synthase family. As to quaternary structure, homodimer.

It catalyses the reaction prephenate + S-adenosyl-L-methionine = carboxy-S-adenosyl-L-methionine + 3-phenylpyruvate + H2O. Catalyzes the conversion of S-adenosyl-L-methionine (SAM) to carboxy-S-adenosyl-L-methionine (Cx-SAM). The sequence is that of Carboxy-S-adenosyl-L-methionine synthase from Aliivibrio salmonicida (strain LFI1238) (Vibrio salmonicida (strain LFI1238)).